A 374-amino-acid polypeptide reads, in one-letter code: DNA integrity scanning protein DisA (374 aa).

The DAC domain maps to 20–158; it reads DGLMRASLSA…DGMRRVLEDS (139 aa). ATP is bound by residues Gly87, Leu105, and 118 to 122; that span reads TRHRT.

It belongs to the DisA family. Homooctamer. The cofactor is Mg(2+).

The catalysed reaction is 2 ATP = 3',3'-c-di-AMP + 2 diphosphate. Participates in a DNA-damage check-point that is active prior to asymmetric division when DNA is damaged. DisA forms globular foci that rapidly scan along the chromosomes during sporulation, searching for lesions. When a lesion is present, DisA pauses at the lesion site. This triggers a cellular response that culminates in a temporary block in sporulation initiation. Its function is as follows. Also has diadenylate cyclase activity, catalyzing the condensation of 2 ATP molecules into cyclic di-AMP (c-di-AMP). c-di-AMP acts as a signaling molecule that couples DNA integrity with progression of sporulation. The rise in c-di-AMP level generated by DisA while scanning the chromosome, operates as a positive signal that advances sporulation; upon encountering a lesion, the DisA focus arrests at the damaged site and halts c-di-AMP synthesis. This is DNA integrity scanning protein DisA from Streptomyces avermitilis (strain ATCC 31267 / DSM 46492 / JCM 5070 / NBRC 14893 / NCIMB 12804 / NRRL 8165 / MA-4680).